The following is a 1219-amino-acid chain: Protein jagged-1 (1219 aa).

The N-terminal stretch at Met1 to Gly33 is a signal peptide. The Extracellular segment spans residues Gln34–Asp1067. The N-linked (GlcNAc...) asparagine glycan is linked to Asn143. The 45-residue stretch at Val185 to Cys229 folds into the DSL domain. Cystine bridges form between Cys187-Cys196 and Cys200-Cys212. The important for interaction with NOTCH1 stretch occupies residues Phe199–Phe207. N-linked (GlcNAc...) asparagine glycosylation occurs at Asn217. Cystine bridges form between Cys220/Cys229, Cys234/Cys245, Cys238/Cys251, Cys253/Cys262, Cys265/Cys276, Cys271/Cys282, Cys284/Cys293, Cys300/Cys312, Cys306/Cys322, Cys324/Cys333, Cys340/Cys351, Cys345/Cys360, Cys362/Cys371, Cys378/Cys389, Cys383/Cys398, Cys400/Cys409, Cys416/Cys427, Cys421/Cys436, Cys438/Cys447, Cys454/Cys464, Cys458/Cys473, Cys475/Cys484, Cys491/Cys502, Cys496/Cys511, Cys513/Cys522, Cys529/Cys540, Cys534/Cys549, Cys551/Cys560, Cys578/Cys605, Cys599/Cys615, Cys617/Cys626, Cys633/Cys644, Cys638/Cys653, Cys655/Cys664, Cys671/Cys682, Cys676/Cys691, Cys693/Cys702, Cys709/Cys720, Cys714/Cys729, and Cys731/Cys740. The 34-residue stretch at Asn230–Asp263 folds into the EGF-like 1 domain. The region spanning Lys264–Asp294 is the EGF-like 2; atypical domain. EGF-like domains are found at residues Asp296–Glu334 and Ala336–Ser372. The EGF-like 5; calcium-binding domain occupies Asn374 to Gln410. Asn382 carries an N-linked (GlcNAc...) asparagine glycan. In terms of domain architecture, EGF-like 6; calcium-binding spans Asp412–Asp448. Residues Asn450 to Glu485 enclose the EGF-like 7; calcium-binding domain. The EGF-like 8; calcium-binding domain maps to Asp487–Gln523. 2 consecutive EGF-like domains span residues Asp525–Ser561 and Asp586–His627. The N-linked (GlcNAc...) asparagine glycan is linked to Asn559. Positions Asn629–Glu665 constitute an EGF-like 11; calcium-binding domain. Residues Asn667–His703 enclose the EGF-like 12; calcium-binding domain. EGF-like domains lie at Arg705–Asn741 and Arg744–Thr780. A glycan (N-linked (GlcNAc...) asparagine) is linked at Asn745. Cystine bridges form between Cys748-Cys759, Cys753-Cys768, Cys770-Cys779, Cys786-Cys797, Cys791-Cys806, Cys808-Cys817, Cys824-Cys835, Cys829-Cys844, Cys846-Cys855, Cys925-Cys936, and Cys948-Cys958. One can recognise an EGF-like 15; calcium-binding domain in the interval Asn782–Arg818. Residues Asn820–His856 form the EGF-like 16; calcium-binding domain. N-linked (GlcNAc...) asparagine glycans are attached at residues Asn960, Asn991, Asn1045, and Asn1064. Residues Phe1068 to Val1093 traverse the membrane as a helical segment. The Cytoplasmic portion of the chain corresponds to Arg1094–Val1219. The tract at residues Arg1182–Val1219 is disordered. Polar residues predominate over residues Arg1189–Lys1200.

In terms of assembly, interacts with NOTCH1. Interacts with NOTCH2 and NOTCH3. Widely expressed in a variety of tissues.

It is found in the membrane. Its subcellular location is the cell membrane. Ligand for multiple Notch receptors and involved in the mediation of Notch signaling. May be involved in cell-fate decisions during hematopoiesis. Enhances fibroblast growth factor-induced angiogenesis (in vitro). Seems to be involved in early and late stages of mammalian cardiovascular development. Inhibits myoblast differentiation. May regulate fibroblast growth factor-induced angiogenesis. The chain is Protein jagged-1 (Jag1) from Rattus norvegicus (Rat).